We begin with the raw amino-acid sequence, 49 residues long: Lysozyme C (49 aa).

The C-type lysozyme domain occupies 1 to 49; the sequence is SKMKKCEFAKIAKEQHMDGYHGVSLADWVCLVNNESDFNTKAINRNKGI. The active site involves Glu-35.

This sequence belongs to the glycosyl hydrolase 22 family. Monomer.

Its subcellular location is the secreted. The enzyme catalyses Hydrolysis of (1-&gt;4)-beta-linkages between N-acetylmuramic acid and N-acetyl-D-glucosamine residues in a peptidoglycan and between N-acetyl-D-glucosamine residues in chitodextrins.. In terms of biological role, lysozymes have primarily a bacteriolytic function; those in tissues and body fluids are associated with the monocyte-macrophage system and enhance the activity of immunoagents. This Pseudocheirus peregrinus (Common ring-tailed possum) protein is Lysozyme C (LYZ).